The following is a 624-amino-acid chain: Elongation factor 4 (624 aa).

The 187-residue stretch at 17-203 folds into the tr-type G domain; it reads ALIRNFCIIA…RVVRDVPAPV (187 aa). GTP is bound by residues 29–34 and 150–153; these read DHGKST and NKID.

This sequence belongs to the TRAFAC class translation factor GTPase superfamily. Classic translation factor GTPase family. LepA subfamily.

It is found in the cell membrane. The catalysed reaction is GTP + H2O = GDP + phosphate + H(+). Functionally, required for accurate and efficient protein synthesis under certain stress conditions. May act as a fidelity factor of the translation reaction, by catalyzing a one-codon backward translocation of tRNAs on improperly translocated ribosomes. Back-translocation proceeds from a post-translocation (POST) complex to a pre-translocation (PRE) complex, thus giving elongation factor G a second chance to translocate the tRNAs correctly. Binds to ribosomes in a GTP-dependent manner. The chain is Elongation factor 4 from Streptomyces griseus subsp. griseus (strain JCM 4626 / CBS 651.72 / NBRC 13350 / KCC S-0626 / ISP 5235).